Here is a 109-residue protein sequence, read N- to C-terminus: uncharacterized protein (109 aa).

The protein localises to the mitochondrion. This is an uncharacterized protein from Arabidopsis thaliana (Mouse-ear cress).